Consider the following 256-residue polypeptide: Triosephosphate isomerase (256 aa).

9 to 11 is a substrate binding site; the sequence is NWK. H97 functions as the Electrophile in the catalytic mechanism. Residue E169 is the Proton acceptor of the active site. Residues G175, S214, and 235–236 contribute to the substrate site; that span reads GG.

This sequence belongs to the triosephosphate isomerase family. In terms of assembly, homodimer.

It is found in the cytoplasm. It carries out the reaction D-glyceraldehyde 3-phosphate = dihydroxyacetone phosphate. It functions in the pathway carbohydrate biosynthesis; gluconeogenesis. It participates in carbohydrate degradation; glycolysis; D-glyceraldehyde 3-phosphate from glycerone phosphate: step 1/1. Involved in the gluconeogenesis. Catalyzes stereospecifically the conversion of dihydroxyacetone phosphate (DHAP) to D-glyceraldehyde-3-phosphate (G3P). The chain is Triosephosphate isomerase from Vibrio parahaemolyticus serotype O3:K6 (strain RIMD 2210633).